Consider the following 155-residue polypeptide: SsrA-binding protein (155 aa).

It belongs to the SmpB family.

It is found in the cytoplasm. Its function is as follows. Required for rescue of stalled ribosomes mediated by trans-translation. Binds to transfer-messenger RNA (tmRNA), required for stable association of tmRNA with ribosomes. tmRNA and SmpB together mimic tRNA shape, replacing the anticodon stem-loop with SmpB. tmRNA is encoded by the ssrA gene; the 2 termini fold to resemble tRNA(Ala) and it encodes a 'tag peptide', a short internal open reading frame. During trans-translation Ala-aminoacylated tmRNA acts like a tRNA, entering the A-site of stalled ribosomes, displacing the stalled mRNA. The ribosome then switches to translate the ORF on the tmRNA; the nascent peptide is terminated with the 'tag peptide' encoded by the tmRNA and targeted for degradation. The ribosome is freed to recommence translation, which seems to be the essential function of trans-translation. This chain is SsrA-binding protein, found in Clostridium acetobutylicum (strain ATCC 824 / DSM 792 / JCM 1419 / IAM 19013 / LMG 5710 / NBRC 13948 / NRRL B-527 / VKM B-1787 / 2291 / W).